Here is a 123-residue protein sequence, read N- to C-terminus: Nitrogenase-stabilizing/protective protein NifW (123 aa).

It belongs to the NifW family. As to quaternary structure, homotrimer; associates with NifD.

May protect the nitrogenase Fe-Mo protein from oxidative damage. The chain is Nitrogenase-stabilizing/protective protein NifW from Rhodopseudomonas palustris (strain HaA2).